Here is a 357-residue protein sequence, read N- to C-terminus: D-amino-acid oxidase (357 aa).

FAD contacts are provided by Ala13, Gly14, Ser42, Gly47, Arg289, Gly315, and Gly318. Residue Arg289 participates in D-proline binding. Arg289 is a binding site for D-serine.

Belongs to the DAMOX/DASOX family. The cofactor is FAD.

It localises to the cytoplasm. Its subcellular location is the secreted. It is found in the cell wall. The enzyme catalyses a D-alpha-amino acid + O2 + H2O = a 2-oxocarboxylate + H2O2 + NH4(+). The catalysed reaction is D-phenylalanine + O2 + H2O = 3-phenylpyruvate + H2O2 + NH4(+). It catalyses the reaction D-lysine + O2 + H2O = 6-amino-2-oxohexanoate + H2O2 + NH4(+). It carries out the reaction D-methionine + O2 + H2O = 4-methylsulfanyl-2-oxobutanoate + H2O2 + NH4(+). The enzyme catalyses D-arginine + O2 + H2O = 5-guanidino-2-oxopentanoate + H2O2 + NH4(+). The catalysed reaction is D-ornithine + O2 + H2O = 5-amino-2-oxopentanoate + H2O2 + NH4(+). It catalyses the reaction D-leucine + O2 + H2O = 4-methyl-2-oxopentanoate + H2O2 + NH4(+). It carries out the reaction D-histidine + O2 + H2O = 3-(imidazol-5-yl)pyruvate + H2O2 + NH4(+). Its activity is regulated as follows. Activated by manganese, copper, and iron ions. Inhibited by barium, aluminum, and zinc ions. Functionally, catalyzes the oxidative deamination of D-amino acids with broad substrate specificity. The polypeptide is D-amino-acid oxidase (Unknown prokaryotic organism).